Consider the following 281-residue polypeptide: CMT1A duplicated region transcript 15 protein-like protein (281 aa).

Disordered regions lie at residues 107-131 and 150-187; these read KPAW…DQPS and AENV…HGGG. Positions 108 to 120 are enriched in basic and acidic residues; the sequence is PAWEEPPPERALE. The span at 165 to 178 shows a compositional bias: low complexity; sequence STAPASRSHAAPSP. Residues 207–227 traverse the membrane as a helical segment; it reads AGTTALLLQGLFIVLILVGYI.

It is found in the membrane. This chain is CMT1A duplicated region transcript 15 protein-like protein (CDRT15L2), found in Homo sapiens (Human).